The primary structure comprises 223 residues: Ribose-5-phosphate isomerase A (223 aa).

Residues 32–35 (TGST), 83–86 (DGAD), and 96–99 (KGGG) each bind substrate. The active-site Proton acceptor is Glu105. A substrate-binding site is contributed by Lys123.

This sequence belongs to the ribose 5-phosphate isomerase family. As to quaternary structure, homodimer.

The enzyme catalyses aldehydo-D-ribose 5-phosphate = D-ribulose 5-phosphate. It functions in the pathway carbohydrate degradation; pentose phosphate pathway; D-ribose 5-phosphate from D-ribulose 5-phosphate (non-oxidative stage): step 1/1. Functionally, catalyzes the reversible conversion of ribose-5-phosphate to ribulose 5-phosphate. This chain is Ribose-5-phosphate isomerase A, found in Acinetobacter baumannii (strain SDF).